The following is a 157-amino-acid chain: 3-dehydroquinate dehydratase (157 aa).

Tyr29 serves as the catalytic Proton acceptor. Substrate-binding residues include Asn80, His86, and Asp93. The Proton donor role is filled by His107. Substrate contacts are provided by residues 108 to 109 and Arg118; that span reads IS.

Belongs to the type-II 3-dehydroquinase family. Homododecamer.

The catalysed reaction is 3-dehydroquinate = 3-dehydroshikimate + H2O. It functions in the pathway metabolic intermediate biosynthesis; chorismate biosynthesis; chorismate from D-erythrose 4-phosphate and phosphoenolpyruvate: step 3/7. Catalyzes a trans-dehydration via an enolate intermediate. This is 3-dehydroquinate dehydratase (aroQ) from Streptomyces coelicolor (strain ATCC BAA-471 / A3(2) / M145).